A 406-amino-acid polypeptide reads, in one-letter code: Acetate kinase (406 aa).

A Mg(2+)-binding site is contributed by asparagine 7. Position 14 (lysine 14) interacts with ATP. Substrate is bound at residue arginine 90. The active-site Proton donor/acceptor is aspartate 147. Residues 207–211, 283–285, and 331–335 contribute to the ATP site; these read HLGNG, DMR, and GVGEN. Glutamate 385 provides a ligand contact to Mg(2+).

The protein belongs to the acetokinase family. In terms of assembly, homodimer. Requires Mg(2+) as cofactor. Mn(2+) is required as a cofactor.

The protein resides in the cytoplasm. The catalysed reaction is acetate + ATP = acetyl phosphate + ADP. It participates in metabolic intermediate biosynthesis; acetyl-CoA biosynthesis; acetyl-CoA from acetate: step 1/2. In terms of biological role, catalyzes the formation of acetyl phosphate from acetate and ATP. Can also catalyze the reverse reaction. The polypeptide is Acetate kinase (Thermosipho melanesiensis (strain DSM 12029 / CIP 104789 / BI429)).